The following is a 625-amino-acid chain: Probable potassium transport system protein Kup (625 aa).

Transmembrane regions (helical) follow at residues 13–33 (TALAALGVVFGDIGTSPLYAL), 53–73 (ILSIIFWCLMLIISIKYVAIV), 103–123 (IYMIAIGFIGASLFFGDGIIT), 141–161 (VFDPFIMPIAIAIIVTLFLVQ), 172–192 (FGPITLVWFLSLGILGIHSVI), 206–226 (AIQFIYHHPIMTFFVMGAVVL), 250–270 (WFFVVLPCLVLNYAGQGALLL), 282–302 (LLVPQWALYPMIIMATMATVI), 340–360 (IYVPFLNWLLLIAIIILILIF), 369–389 (AYGLAVTLTMLCDTILVAVFI), 400–420 (VLLLIIPFFILESVLVGATSL), and 422–442 (ILSGGWVPLLIGAIAVTILMT).

It belongs to the HAK/KUP transporter (TC 2.A.72) family.

The protein localises to the cell inner membrane. The enzyme catalyses K(+)(in) + H(+)(in) = K(+)(out) + H(+)(out). Its function is as follows. Transport of potassium into the cell. Likely operates as a K(+):H(+) symporter. This chain is Probable potassium transport system protein Kup, found in Acinetobacter baumannii (strain ACICU).